The following is a 972-amino-acid chain: uncharacterized protein (972 aa).

The N-terminal stretch at 1–21 (MTNMILLSAVFLSLAILETHC) is a signal peptide. The Extracellular portion of the chain corresponds to 22-932 (ANHISTGIST…KELGEKLYHV (911 aa)). Positions 892–912 (EPTVTTTTESPPPPTTTTRQI) are disordered. The chain crosses the membrane as a helical span at residues 933-953 (LFFMGVLTVSVAGGVIILSFI). Over 954–972 (GCLIMRKMEDAPQKTKYSV) the chain is Cytoplasmic.

It localises to the host membrane. This is an uncharacterized protein from Magallana gigas (Pacific oyster).